The following is a 360-amino-acid chain: uncharacterized protein (360 aa).

3 Solcar repeats span residues 34–153, 172–256, and 266–355; these read VGVL…LSVW, PDWS…FKTN, and NPFV…FKFL. Transmembrane regions (helical) follow at residues 40–60, 125–145, 178–198, 225–247, 269–289, and 327–348; these read VSASSSGAIVTSLFMTPLDVV, LWSGLSPTMVMALPATVFYFT, AVAGIVARTIAVTVVSPIEMI, ISSFYLGWTPTMLRDIPFSGIYW, VVSFVSGAAAGVVASIFTHPF, and FSSGLVPRLVKVSPSCAIMISF.

The protein belongs to the mitochondrial carrier (TC 2.A.29) family.

The protein resides in the mitochondrion inner membrane. This is an uncharacterized protein from Caenorhabditis elegans.